We begin with the raw amino-acid sequence, 172 residues long: C-phycocyanin beta chain (172 aa).

Asparagine 72 bears the N4-methylasparagine mark. 2 residues coordinate (2R,3E)-phycocyanobilin: cysteine 82 and cysteine 153.

The protein belongs to the phycobiliprotein family. Heterodimer of an alpha and a beta subunit, which further assembles into trimers and the trimers into hexamers. The basic functional unit of phycobiliproteins is a ring-shaped hexamer formed from two back-to-back trimers contacting via the alpha chain subunits. The trimers are composed of alpha/beta subunit heterodimers arranged around a three-fold axis of symmetry. The phycoerythrins also contain a gamma subunit which is located in the center of the hexamer. In terms of processing, contains two covalently linked bilin chromophores.

It is found in the plastid. The protein localises to the chloroplast thylakoid membrane. Its function is as follows. Light-harvesting photosynthetic bile pigment-protein from the phycobiliprotein complex (phycobilisome, PBS). Phycocyanin is the major phycobiliprotein in the PBS rod. In Pyropia yezoensis (Susabi-nori), this protein is C-phycocyanin beta chain (cpcB).